We begin with the raw amino-acid sequence, 331 residues long: L-lactate dehydrogenase A chain (331 aa).

NAD(+)-binding positions include G29–K57 and R98. Residues R105, N137, and R168 each contribute to the substrate site. N137 contributes to the NAD(+) binding site. Catalysis depends on H192, which acts as the Proton acceptor. T247 serves as a coordination point for substrate.

This sequence belongs to the LDH/MDH superfamily. LDH family. As to quaternary structure, homotetramer.

It is found in the cytoplasm. It catalyses the reaction (S)-lactate + NAD(+) = pyruvate + NADH + H(+). Its pathway is fermentation; pyruvate fermentation to lactate; (S)-lactate from pyruvate: step 1/1. Functionally, interconverts simultaneously and stereospecifically pyruvate and lactate with concomitant interconversion of NADH and NAD(+). The protein is L-lactate dehydrogenase A chain (ldha) of Parachaenichthys charcoti (Charcot's dragonfish).